A 339-amino-acid polypeptide reads, in one-letter code: EEIG family member 2 (339 aa).

Positions 1–111 (MRLLDGGSFT…ILKVLISMQL (111 aa)) constitute a C2 NT-type domain. At Ser-197 the chain carries Phosphoserine. The segment at 226–262 (TEPITAEPSPDPTAAAATATTTTAKEEEASEKLARCP) is disordered. Over residues 230–248 (TAEPSPDPTAAAATATTTT) the composition is skewed to low complexity. The segment covering 249–259 (AKEEEASEKLA) has biased composition (basic and acidic residues). Phosphoserine occurs at positions 255, 267, 299, 300, and 329.

Belongs to the EEIG family. In terms of tissue distribution, expressed in bone marrow-derived macrophages.

The protein is EEIG family member 2 (Eeig2) of Mus musculus (Mouse).